A 377-amino-acid chain; its full sequence is DAR GTPase 2, mitochondrial (377 aa).

A mitochondrion-targeting transit peptide spans 1-21 (MATAKTWKIAREIGDAVIKAS). In terms of domain architecture, CP-type G spans 34 to 211 (AAAVRAISER…VLDTPGIFPP (178 aa)). Positions 55-59 (DARIP) match the DARXP motif motif. GTP contacts are provided by residues 82 to 85 (NKME), 110 to 111 (NS), 150 to 155 (NVGKSA), and Gly207.

This sequence belongs to the TRAFAC class YlqF/YawG GTPase family. MTG1 subfamily.

The protein localises to the mitochondrion. In terms of biological role, GTPase that may function in mitochondrial ribosome assembly. The protein is DAR GTPase 2, mitochondrial of Arabidopsis thaliana (Mouse-ear cress).